We begin with the raw amino-acid sequence, 385 residues long: 1-deoxy-D-xylulose 5-phosphate reductoisomerase (385 aa).

Threonine 11, glycine 12, serine 13, isoleucine 14, asparagine 39, and asparagine 123 together coordinate NADPH. Residue lysine 124 participates in 1-deoxy-D-xylulose 5-phosphate binding. Position 125 (glutamate 125) interacts with NADPH. Residue aspartate 149 participates in Mn(2+) binding. Positions 150, 151, 174, and 197 each coordinate 1-deoxy-D-xylulose 5-phosphate. Residue glutamate 151 coordinates Mn(2+). Residue glycine 203 participates in NADPH binding. Residues serine 210, asparagine 215, lysine 216, and glutamate 219 each contribute to the 1-deoxy-D-xylulose 5-phosphate site. Glutamate 219 is a binding site for Mn(2+).

Belongs to the DXR family. Requires Mg(2+) as cofactor. Mn(2+) serves as cofactor.

It catalyses the reaction 2-C-methyl-D-erythritol 4-phosphate + NADP(+) = 1-deoxy-D-xylulose 5-phosphate + NADPH + H(+). Its pathway is isoprenoid biosynthesis; isopentenyl diphosphate biosynthesis via DXP pathway; isopentenyl diphosphate from 1-deoxy-D-xylulose 5-phosphate: step 1/6. Functionally, catalyzes the NADPH-dependent rearrangement and reduction of 1-deoxy-D-xylulose-5-phosphate (DXP) to 2-C-methyl-D-erythritol 4-phosphate (MEP). In Porphyromonas gingivalis (strain ATCC 33277 / DSM 20709 / CIP 103683 / JCM 12257 / NCTC 11834 / 2561), this protein is 1-deoxy-D-xylulose 5-phosphate reductoisomerase.